Here is a 310-residue protein sequence, read N- to C-terminus: Olfactory receptor 4C11 (310 aa).

The Extracellular segment spans residues Met1 to Lys23. A glycan (N-linked (GlcNAc...) asparagine) is linked at Asn4. Residues Ile24 to Ile47 form a helical membrane-spanning segment. The Cytoplasmic portion of the chain corresponds to Lys48–Ser55. Residues Pro56–Pro77 form a helical membrane-spanning segment. Topologically, residues Arg78–Gln98 are extracellular. A disulfide bond links Cys95 and Cys187. A helical transmembrane segment spans residues Val99 to Val118. The Cytoplasmic segment spans residues Asp119–Gln137. A helical transmembrane segment spans residues Val138–Ala156. Topologically, residues Gln157–Ile193 are extracellular. The chain crosses the membrane as a helical span at residues Asn194–Ile217. Over Val218–Lys233 the chain is Cytoplasmic. Residues Ala234–Tyr256 traverse the membrane as a helical segment. Residues Thr257–Lys267 are Extracellular-facing. The helical transmembrane segment at Met268–Leu287 threads the bilayer. The Cytoplasmic portion of the chain corresponds to Arg288–Gly310.

Belongs to the G-protein coupled receptor 1 family.

It is found in the cell membrane. Functionally, odorant receptor. The polypeptide is Olfactory receptor 4C11 (OR4C11) (Homo sapiens (Human)).